The following is a 235-amino-acid chain: Large ribosomal subunit protein uL1 (235 aa).

The protein belongs to the universal ribosomal protein uL1 family. In terms of assembly, part of the 50S ribosomal subunit.

Binds directly to 23S rRNA. The L1 stalk is quite mobile in the ribosome, and is involved in E site tRNA release. Functionally, protein L1 is also a translational repressor protein, it controls the translation of the L11 operon by binding to its mRNA. In Parasynechococcus marenigrum (strain WH8102), this protein is Large ribosomal subunit protein uL1.